Consider the following 328-residue polypeptide: V-type sodium ATPase subunit C (328 aa).

Belongs to the V-ATPase V0D/AC39 subunit family.

Involved in ATP-driven sodium extrusion. This Enterococcus hirae (strain ATCC 9790 / DSM 20160 / JCM 8729 / LMG 6399 / NBRC 3181 / NCIMB 6459 / NCDO 1258 / NCTC 12367 / WDCM 00089 / R) protein is V-type sodium ATPase subunit C (ntpC).